The chain runs to 171 residues: uncharacterized protein (171 aa).

2 disordered regions span residues 1–41 and 114–147; these read MDAV…SKPK and DSLGNTASSSSMDPAKGVPSQSGPPEGLGLRPKR. The span at 27 to 38 shows a compositional bias: low complexity; sequence AQQQQGPSAQGS. A compositionally biased stretch (polar residues) spans 116–125; sequence LGNTASSSSM.

This is an uncharacterized protein from Mus musculus (Mouse).